We begin with the raw amino-acid sequence, 284 residues long: Tropomyosin (284 aa).

Positions 1–284 (MEAIKNKMQA…DQTFAELTGY (284 aa)) form a coiled coil.

This sequence belongs to the tropomyosin family. Homodimer.

Its function is as follows. Tropomyosin, in association with the troponin complex, plays a central role in the calcium dependent regulation of muscle contraction. The chain is Tropomyosin from Dermatophagoides pteronyssinus (European house dust mite).